Reading from the N-terminus, the 221-residue chain is Glutathione S-transferase A3 (221 aa).

At Ala2 the chain carries N-acetylalanine. Residues Gly3–Gly83 form the GST N-terminal domain. An N6-succinyllysine modification is found at Lys4. Glutathione-binding positions include Tyr9, Arg45, Gln54–Val55, and Gln67–Thr68. Positions Asp85–Phe207 constitute a GST C-terminal domain.

Homodimer.

The protein localises to the cytoplasm. The enzyme catalyses RX + glutathione = an S-substituted glutathione + a halide anion + H(+). It carries out the reaction androst-5-ene-3,17-dione = androst-4-ene-3,17-dione. It catalyses the reaction pregn-5-ene-3,20-dione = progesterone. Functionally, conjugation of reduced glutathione to a wide number of exogenous and endogenous hydrophobic electrophiles. Catalyzes isomerization reactions that contribute to the biosynthesis of steroid hormones. Efficiently catalyze obligatory double-bond isomerizations of delta(5)-androstene-3,17-dione and delta(5)-pregnene-3,20-dione, precursors to testosterone and progesterone, respectively. Has a high catalytic activity for aflatoxin B1-8,9 epoxide. The polypeptide is Glutathione S-transferase A3 (Mus musculus (Mouse)).